A 164-amino-acid polypeptide reads, in one-letter code: Sorting nexin-3 (164 aa).

The segment at 1 to 26 is disordered; it reads MSGKREFKSFGSTEETMFSQHHKIPS. The segment covering 10–26 has biased composition (polar residues); sequence FGSTEETMFSQHHKIPS. One can recognise a PX domain in the interval 40 to 163; sequence IEVRNPKTHV…IRFIEDDKFV (124 aa). Residues R83, S85, K114, R120, and R129 each coordinate a 1,2-diacyl-sn-glycero-3-phospho-(1D-myo-inositol-3-phosphate).

This sequence belongs to the sorting nexin family.

It is found in the cytoplasm. Its subcellular location is the golgi apparatus membrane. It localises to the prevacuolar compartment membrane. Its function is as follows. Required for retention of late Golgi membrane proteins. Component of the retrieval machinery that functions by direct interaction with the cytosolic tails of certain TGN membrane proteins during the sorting/budding process at the prevacuolar compartment. Binds phosphatidylinositol 3-phosphate (PtdIns(P3)). The polypeptide is Sorting nexin-3 (SNX3) (Candida glabrata (strain ATCC 2001 / BCRC 20586 / JCM 3761 / NBRC 0622 / NRRL Y-65 / CBS 138) (Yeast)).